The sequence spans 944 residues: MKGPSIVVKGARAHNLKGVDIELPKNKLIVMTGLSGSGKSSLAFDTIYAEGQRRYVESLSAYARQFLGQMDKPDVDTIEGLSPAISIDQKTTSKNPRSTVATVTEIYDYIRLLYARVGKPYCPYHGIEIESQTVQQMVDRILELEERTKIQLLAPVISHRKGSHEKLIEDIGKKGYVRLRVDDEIVDVNEVPQLDKNKNHTIEVVVDRLVVKDGIETRLADSIETALELAEGNLTVDVINGEELKFSENHACPICGFSIGELEPRMFSFNSPFGACPTCDGLGQKLKVDLDLVIPDKNKTLNEGAIEPWEPTSSDFYPTLLKRVCEVYKINMDKPYKKLTDRQKNILMNGSGEKEIEFTFTQRNGGTRKRKMVFEGVVPNIDRRYHESPSEYTREMMSKYMTELPCETCHGKRLSKEALSVYVGDYNIGEVVEYSIKNALYYFENLKLSDQDKSIADQILKEIISRLSFLNNVGLEYLTLDRSSGTLSGGEAQRIRLATQIGSRLTGVLYVLDEPSIGLHQRDNDRLINTLKEMRDLGNTLIVVEHDDDTMRAADYLVDVGPGAGNHGGEVVSSGTPNKVMKDKKSLTGQYLSGKKRIEVPEYRREITDRKIQIKGAKSNNLKNVNVDFPLSVLTVVTGVSGSGKSSLVNEILYKALAQKINKSKVKPGNFDEIKGIDQLDKIIDIDQSPIGRTPRSNPATYTGVFDDIRDVFAQTNEAKIRGYQKGRFSFNVKGGRCEACKGDGIIKIEMHFLPDVYVPCEVCDGKRYNRETLEVTYKGKNIADVLEMTVEEATHFFENIPKIKRKLQTLVDVGLGYITLGQQATTLSGGEAQRVKLASELHKRSTGRSIYILDEPTTGLHVDDISRLLKVLNRIVENGDTVVIIEHNLDVIKTADHIIDLGPEGGEGGGTIIATGTPEEIAQNKGSYTGQYLKPVLERDSVE.

33–40 (GLSGSGKS) serves as a coordination point for ATP. Residues 252–279 (CPICGFSIGELEPRMFSFNSPFGACPTC) form a C4-type zinc finger. ABC transporter domains follow at residues 309 to 587 (WEPT…KKSL) and 607 to 935 (ITDR…QYLK). 639 to 646 (GVSGSGKS) contributes to the ATP binding site. Residues 738–764 (CEACKGDGIIKIEMHFLPDVYVPCEVC) form a C4-type zinc finger.

The protein belongs to the ABC transporter superfamily. UvrA family. Forms a heterotetramer with UvrB during the search for lesions.

Its subcellular location is the cytoplasm. Its function is as follows. The UvrABC repair system catalyzes the recognition and processing of DNA lesions. UvrA is an ATPase and a DNA-binding protein. A damage recognition complex composed of 2 UvrA and 2 UvrB subunits scans DNA for abnormalities. When the presence of a lesion has been verified by UvrB, the UvrA molecules dissociate. This Staphylococcus epidermidis (strain ATCC 35984 / DSM 28319 / BCRC 17069 / CCUG 31568 / BM 3577 / RP62A) protein is UvrABC system protein A.